A 281-amino-acid polypeptide reads, in one-letter code: Elongation factor 1-delta (281 aa).

A2 is subject to N-acetylalanine. K17 bears the N6-acetyllysine mark. Residues S37, S44, S60, S86, and S106 each carry the phosphoserine modification. A leucine-zipper region spans residues 80–115 (LIVRIASLEVENQNLRGVVQDLQQAISKLEVRLSTL). Residue K107 is modified to N6-acetyllysine. A compositionally biased stretch (polar residues) spans 115 to 132 (LEKSSPTHRATAPQTQHV). Residues 115–172 (LEKSSPTHRATAPQTQHVSPMRQVEPPAKKGATPAEDDEDNDIDLFGSDEEEEDKEAA) form a disordered region. At K117 the chain carries N6-acetyllysine; alternate. Residue K117 is modified to N6-succinyllysine; alternate. Position 119 is a phosphoserine (S119). T129 bears the Phosphothreonine mark. S133 is subject to Phosphoserine. Phosphothreonine is present on T147. A compositionally biased stretch (acidic residues) spans 149–169 (AEDDEDNDIDLFGSDEEEEDK). S162 is subject to Phosphoserine; by CK2. A catalytic (GEF) region spans residues 173 to 281 (RLREERLRQY…SVDIAAFNKI (109 aa)).

This sequence belongs to the EF-1-beta/EF-1-delta family. EF-1 is composed of 4 subunits: alpha, beta, delta isoform 1, and gamma. Isoform 2 interacts with HSF1 and NFE2L2.

Its subcellular location is the nucleus. In terms of biological role, EF-1-beta and EF-1-delta stimulate the exchange of GDP bound to EF-1-alpha to GTP, regenerating EF-1-alpha for another round of transfer of aminoacyl-tRNAs to the ribosome. Functionally, regulates induction of heat-shock-responsive genes through association with heat shock transcription factors and direct DNA-binding at heat shock promoter elements (HSE). The sequence is that of Elongation factor 1-delta (Eef1d) from Rattus norvegicus (Rat).